The chain runs to 673 residues: FLYWCH-type zinc finger-containing protein 1 (673 aa).

The disordered stretch occupies residues 1–62 (MPLPEPSEQD…SSTATLPNNT (62 aa)). At S21 the chain carries Phosphoserine. A compositionally biased stretch (polar residues) spans 47-62 (VASQETSSTATLPNNT). FLYWCH-type zinc fingers lie at residues 92-150 (FLKT…DHCH) and 235-293 (FLKT…SHCH). Residue K110 forms a Glycyl lysine isopeptide (Lys-Gly) (interchain with G-Cter in SUMO2) linkage. The segment covering 147-158 (DHCHPPEKEGLD) has biased composition (basic and acidic residues). Residues 147–178 (DHCHPPEKEGLDRKKRHRGRPPSSALPEGAEV) form a disordered region. 2 positions are modified to phosphoserine: S294 and S339. A disordered region spans residues 351–402 (LSRSKSKSKSKSRSKSKSKSRSRSRKRAKKQQESSQEPPEEDQDVDPRGPEF). A compositionally biased stretch (basic residues) spans 354 to 379 (SKSKSKSKSRSKSKSKSRSRSRKRAK). 3 FLYWCH-type zinc fingers span residues 402–460 (FLKT…SHCH), 490–548 (FLKT…RHCH), and 581–639 (FLRT…SHCH). The interval 646-673 (LEALRQREKAPSAAKKKKKKKKKKKGIH) is disordered. Basic residues predominate over residues 659 to 673 (AKKKKKKKKKKKGIH). Residue K666 forms a Glycyl lysine isopeptide (Lys-Gly) (interchain with G-Cter in SUMO2) linkage.

Interacts with CTNNB1 (when unphosphorylated), perhaps preventing interaction of CTNNB1 with TCF4, and thereby regulating transcription activation; phosphorylation of CTNNB1 may inhibit the interaction.

It localises to the nucleus. Its subcellular location is the chromosome. It is found in the centromere. In terms of biological role, transcription cofactor. Negatively regulates transcription activation by catenin beta-1 CTNNB1, perhaps acting by competing with TCF4 for CTNNB1 binding. May play a role in DNA-damage response signaling. Binds specifically to DNA sequences at peri-centromeric chromatin loci. This Mus musculus (Mouse) protein is FLYWCH-type zinc finger-containing protein 1 (Flywch1).